Here is a 585-residue protein sequence, read N- to C-terminus: Tyramine beta-hydroxylase (585 aa).

The N-terminal stretch at 1 to 21 is a signal peptide; that stretch reads MKCANAAALLFFVLCDIGVHG. The DOMON domain occupies 31-142; that stretch reads SNVTVKWQTD…GTTQFYIAAS (112 aa). Residues asparagine 32 and asparagine 71 are each glycosylated (N-linked (GlcNAc...) asparagine). Tyrosine 206 is a catalytic residue. 2 disulfide bridges follow: cysteine 208-cysteine 258 and cysteine 247-cysteine 270. Histidine 240 and histidine 241 together coordinate Cu(2+). Residues histidine 308, histidine 386, and histidine 388 each coordinate Cu(2+). 3 disulfides stabilise this stretch: cysteine 365/cysteine 477, cysteine 369/cysteine 534, and cysteine 440/cysteine 462. Histidine 386 is an active-site residue. Asparagine 449 is a glycosylation site (N-linked (GlcNAc...) asparagine). Methionine 461 contributes to the Cu(2+) binding site. An N-linked (GlcNAc...) asparagine glycan is attached at asparagine 483.

It belongs to the copper type II ascorbate-dependent monooxygenase family. Requires Cu(2+) as cofactor.

It is found in the cytoplasmic vesicle. Its subcellular location is the secretory vesicle. It localises to the synaptic vesicle. It catalyses the reaction tyramine + L-ascorbate + O2 = (R)-octopamine + L-dehydroascorbate + H2O. Its function is as follows. Catalyzes the hydroxylation of tyramine into octopamine, a neurotransmitter involved in pharyngeal pumping and egg laying. This is Tyramine beta-hydroxylase (tbh-1) from Caenorhabditis briggsae.